A 150-amino-acid chain; its full sequence is Ribosome maturation factor RimP (150 aa).

Belongs to the RimP family.

It is found in the cytoplasm. In terms of biological role, required for maturation of 30S ribosomal subunits. The polypeptide is Ribosome maturation factor RimP (Yersinia pestis bv. Antiqua (strain Antiqua)).